Reading from the N-terminus, the 431-residue chain is Putative helicase 055L (431 aa).

Residues 73–222 (WGHVTSKGYC…ALGAFFGRED (150 aa)) enclose the Helicase ATP-binding domain. Residue 86–93 (CPPGFGKT) coordinates ATP. The DEAH box signature appears at 175 to 178 (DEAH). Residues 403–431 (KCDASRPSQSTPTPTGSSQPAPRTRRPQR) form a disordered region. Low complexity predominate over residues 407-424 (SRPSQSTPTPTGSSQPAP).

The sequence is that of Putative helicase 055L from Frog virus 3 (isolate Goorha) (FV-3).